We begin with the raw amino-acid sequence, 483 residues long: MFS-type transporter ppzB (483 aa).

5 helical membrane-spanning segments follow: residues 18-38, 62-82, 96-116, 149-169, and 178-198; these read FILT…GILL, AFLA…GWAA, MFLV…LLVV, IGTI…LGGV, and AVFA…ALVI. A glycan (N-linked (GlcNAc...) asparagine) is linked at Asn-219. Helical transmembrane passes span 281-301, 310-330, 344-364, 374-394, 424-444, and 453-473; these read LAML…ATVP, FSSL…FALG, AAAT…GLPE, VALF…VTSP, FGFS…LGGF, and VMGA…FLFV.

It belongs to the major facilitator superfamily. TCR/Tet family.

It is found in the membrane. MFS-type transporter; part of the gene cluster that mediates the biosynthesis of pyrrolopyrazines, secondary metabolites showing insecticidal activity. Probably involved in the secretion of peramine and other pyrrolopyrazines. This is MFS-type transporter ppzB from Metarhizium rileyi (strain RCEF 4871) (Nomuraea rileyi).